The chain runs to 1175 residues: 1-phosphatidylinositol 4,5-bisphosphate phosphodiesterase beta-4 (1175 aa).

N-acetylalanine is present on alanine 2. The PI-PLC X-box domain maps to 313-463; sequence QEMDHPLAHY…LKRKILIKNK (151 aa). Residues histidine 328 and histidine 375 contribute to the active site. The interval 482 to 511 is disordered; that stretch reads EAGESASPANILEDDNEEEIESADQEEEAH. A compositionally biased stretch (acidic residues) spans 493–508; the sequence is LEDDNEEEIESADQEE. A PI-PLC Y-box domain is found at 565-681; sequence LSTMINYAQP…GYLLKPDFMR (117 aa). One can recognise a C2 domain in the interval 684 to 809; it reads DRTFDPFSET…SLRNEGNKPL (126 aa). Disordered regions lie at residues 863-895 and 1082-1110; these read ADVPSDTSKNDKKGKANTAKANVTPQSSSELRP and KISMENSKAISQDKSIKNKAERERRVREL. Composition is skewed to polar residues over residues 881–895 and 1085–1094; these read AKANVTPQSSSELRP and MENSKAISQD. The residue at position 886 (threonine 886) is a Phosphothreonine. A compositionally biased stretch (basic and acidic residues) spans 1095-1109; it reads KSIKNKAERERRVRE.

It depends on Ca(2+) as a cofactor. As to expression, preferentially expressed in the retina.

It is found in the cell membrane. It catalyses the reaction a 1,2-diacyl-sn-glycero-3-phospho-(1D-myo-inositol-4,5-bisphosphate) + H2O = 1D-myo-inositol 1,4,5-trisphosphate + a 1,2-diacyl-sn-glycerol + H(+). It carries out the reaction a 1,2-diacyl-sn-glycero-3-phospho-(1D-myo-inositol) + H2O = 1D-myo-inositol 1-phosphate + a 1,2-diacyl-sn-glycerol + H(+). Its function is as follows. Activated phosphatidylinositol-specific phospholipase C enzymes catalyze the production of the second messenger molecules diacylglycerol (DAG) and inositol 1,4,5-trisphosphate (IP3) involved in G-protein coupled receptor signaling pathways. PLCB4 is a direct effector of the endothelin receptor signaling pathway that plays an essential role in lower jaw and middle ear structures development. The chain is 1-phosphatidylinositol 4,5-bisphosphate phosphodiesterase beta-4 from Homo sapiens (Human).